A 140-amino-acid chain; its full sequence is Fatty acid-binding protein 12 (140 aa).

Residues arginine 107 and 127 to 129 (RTY) each bind a fatty acid.

It belongs to the calycin superfamily. Fatty-acid binding protein (FABP) family. Expressed in a number of retinoblastoma cell lines.

May play a role in lipid transport. In Homo sapiens (Human), this protein is Fatty acid-binding protein 12 (FABP12).